The chain runs to 101 residues: Small ribosomal subunit protein uS14 (101 aa).

The protein belongs to the universal ribosomal protein uS14 family. Part of the 30S ribosomal subunit. Contacts proteins S3 and S10.

Functionally, binds 16S rRNA, required for the assembly of 30S particles and may also be responsible for determining the conformation of the 16S rRNA at the A site. The polypeptide is Small ribosomal subunit protein uS14 (Synechococcus sp. (strain JA-3-3Ab) (Cyanobacteria bacterium Yellowstone A-Prime)).